The primary structure comprises 101 residues: CRISPR-associated endoribonuclease Cas2 (101 aa).

Residue D8 coordinates Mg(2+).

The protein belongs to the CRISPR-associated endoribonuclease Cas2 protein family. Homodimer, forms a heterotetramer with a Cas1 homodimer. Requires Mg(2+) as cofactor.

Its function is as follows. CRISPR (clustered regularly interspaced short palindromic repeat), is an adaptive immune system that provides protection against mobile genetic elements (viruses, transposable elements and conjugative plasmids). CRISPR clusters contain sequences complementary to antecedent mobile elements and target invading nucleic acids. CRISPR clusters are transcribed and processed into CRISPR RNA (crRNA). Functions as a ssRNA-specific endoribonuclease. Involved in the integration of spacer DNA into the CRISPR cassette. The protein is CRISPR-associated endoribonuclease Cas2 of Lacticaseibacillus rhamnosus (strain ATCC 53103 / LMG 18243 / GG) (Lactobacillus rhamnosus).